The sequence spans 343 residues: Succinylglutamate desuccinylase (343 aa).

3 residues coordinate Zn(2+): His-60, Glu-63, and His-157. Glu-221 is an active-site residue.

The protein belongs to the AspA/AstE family. Succinylglutamate desuccinylase subfamily. It depends on Zn(2+) as a cofactor.

It carries out the reaction N-succinyl-L-glutamate + H2O = L-glutamate + succinate. Its pathway is amino-acid degradation; L-arginine degradation via AST pathway; L-glutamate and succinate from L-arginine: step 5/5. In terms of biological role, transforms N(2)-succinylglutamate into succinate and glutamate. The sequence is that of Succinylglutamate desuccinylase from Idiomarina loihiensis (strain ATCC BAA-735 / DSM 15497 / L2-TR).